Consider the following 168-residue polypeptide: NADH-ubiquinone oxidoreductase chain 6 (168 aa).

Transmembrane regions (helical) follow at residues 1–21 (MKMM…VAFA), 27–47 (IYGG…VVSL), 50–70 (VFLG…VFGY), 87–107 (VVAF…YFMS), and 143–163 (WALA…LEVV).

The protein belongs to the complex I subunit 6 family. In terms of assembly, core subunit of respiratory chain NADH dehydrogenase (Complex I) which is composed of 45 different subunits.

It localises to the mitochondrion inner membrane. It catalyses the reaction a ubiquinone + NADH + 5 H(+)(in) = a ubiquinol + NAD(+) + 4 H(+)(out). In terms of biological role, core subunit of the mitochondrial membrane respiratory chain NADH dehydrogenase (Complex I) which catalyzes electron transfer from NADH through the respiratory chain, using ubiquinone as an electron acceptor. Essential for the catalytic activity and assembly of complex I. The chain is NADH-ubiquinone oxidoreductase chain 6 (MT-ND6) from Didelphis virginiana (North American opossum).